Reading from the N-terminus, the 157-residue chain is Small ribosomal subunit protein uS7 (157 aa).

Belongs to the universal ribosomal protein uS7 family. Part of the 30S ribosomal subunit. Contacts proteins S9 and S11.

Functionally, one of the primary rRNA binding proteins, it binds directly to 16S rRNA where it nucleates assembly of the head domain of the 30S subunit. Is located at the subunit interface close to the decoding center, probably blocks exit of the E-site tRNA. This Chloroflexus aurantiacus (strain ATCC 29366 / DSM 635 / J-10-fl) protein is Small ribosomal subunit protein uS7.